The chain runs to 131 residues: MGYRKLQRTKSQRKALLRDLTTNLILNGKIQTTEARAKEVRRQAEKMITLGKRGDLAARRLAATYLRDVEDENKIKNATNAEDIVEQKAVKTLFSDVAPRFKSRNGGYTRIYKLGQRRGDAAPMALLEFVD.

The protein belongs to the bacterial ribosomal protein bL17 family. As to quaternary structure, part of the 50S ribosomal subunit. Contacts protein L32.

The protein is Large ribosomal subunit protein bL17 of Oenococcus oeni (strain ATCC BAA-331 / PSU-1).